Reading from the N-terminus, the 243-residue chain is Venom nerve growth factor 1 (243 aa).

The first 18 residues, 1–18 (MSMLCYTLIIAFLIGIWA), serve as a signal peptide directing secretion. Positions 19–125 (APKSEDNVPL…TLNRNIRAKR (107 aa)) are excised as a propeptide. Over residues 47–66 (GLKTSRNTDQRHPAPKKAED) the composition is skewed to basic and acidic residues. Residues 47–69 (GLKTSRNTDQRHPAPKKAEDQEL) form a disordered region. Disulfide bonds link C139–C204, C182–C232, and C192–C234. N-linked (GlcNAc...) asparagine glycosylation occurs at N148.

It belongs to the NGF-beta family. As to quaternary structure, homodimer; non-covalently linked. As to expression, expressed by the venom gland.

It is found in the secreted. Its function is as follows. Nerve growth factor is important for the development and maintenance of the sympathetic and sensory nervous systems. It stimulates division and differentiation of sympathetic and embryonic sensory neurons as well as basal forebrain cholinergic neurons in the brain. Its relevance in the snake venom is not clear. However, it has been shown to inhibit metalloproteinase-dependent proteolysis of platelet glycoprotein Ib alpha, suggesting a metalloproteinase inhibition to prevent metalloprotease autodigestion and/or protection against prey proteases. Binds a lipid between the two protein chains in the homodimer. The lipid-bound form promotes histamine relase from mouse mast cells, contrary to the lipid-free form. The sequence is that of Venom nerve growth factor 1 from Pseudonaja textilis (Eastern brown snake).